Consider the following 752-residue polypeptide: Phosphoribosylformylglycinamidine synthase subunit PurL (752 aa).

His-58 is a catalytic residue. ATP is bound by residues Tyr-61 and Lys-103. Residue Glu-105 participates in Mg(2+) binding. Substrate contacts are provided by residues 106–109 (SHNH) and Arg-128. The active-site Proton acceptor is His-107. A Mg(2+)-binding site is contributed by Asp-129. Gln-253 contributes to the substrate binding site. Mg(2+) is bound at residue Asp-281. Residue 325-327 (ESQ) coordinates substrate. Positions 513 and 550 each coordinate ATP. A Mg(2+)-binding site is contributed by Asn-551. Ser-553 lines the substrate pocket.

This sequence belongs to the FGAMS family. Monomer. Part of the FGAM synthase complex composed of 1 PurL, 1 PurQ and 2 PurS subunits.

The protein resides in the cytoplasm. The enzyme catalyses N(2)-formyl-N(1)-(5-phospho-beta-D-ribosyl)glycinamide + L-glutamine + ATP + H2O = 2-formamido-N(1)-(5-O-phospho-beta-D-ribosyl)acetamidine + L-glutamate + ADP + phosphate + H(+). Its pathway is purine metabolism; IMP biosynthesis via de novo pathway; 5-amino-1-(5-phospho-D-ribosyl)imidazole from N(2)-formyl-N(1)-(5-phospho-D-ribosyl)glycinamide: step 1/2. Part of the phosphoribosylformylglycinamidine synthase complex involved in the purines biosynthetic pathway. Catalyzes the ATP-dependent conversion of formylglycinamide ribonucleotide (FGAR) and glutamine to yield formylglycinamidine ribonucleotide (FGAM) and glutamate. The FGAM synthase complex is composed of three subunits. PurQ produces an ammonia molecule by converting glutamine to glutamate. PurL transfers the ammonia molecule to FGAR to form FGAM in an ATP-dependent manner. PurS interacts with PurQ and PurL and is thought to assist in the transfer of the ammonia molecule from PurQ to PurL. This is Phosphoribosylformylglycinamidine synthase subunit PurL from Streptomyces coelicolor (strain ATCC BAA-471 / A3(2) / M145).